The chain runs to 141 residues: HTH-type transcriptional repressor NsrR (141 aa).

Residues 2–129 (QLTSFTDYAL…DDCSIAELLD (128 aa)) enclose the HTH rrf2-type domain. Residues 28 to 51 (ITDVTELFGVSRNHMVKVINRLGQ) constitute a DNA-binding region (H-T-H motif). [2Fe-2S] cluster contacts are provided by Cys91, Cys96, and Cys102.

[2Fe-2S] cluster serves as cofactor.

Functionally, nitric oxide-sensitive repressor of genes involved in protecting the cell against nitrosative stress. May require iron for activity. The protein is HTH-type transcriptional repressor NsrR of Vibrio vulnificus (strain CMCP6).